The following is a 104-amino-acid chain: Disrupted in renal carcinoma protein 1 (104 aa).

The segment at 1 to 23 (MPEAHMQPAKLQTSLPTTDHGSK) is disordered. Residues 10 to 19 (KLQTSLPTTD) show a composition bias toward polar residues.

As to expression, expressed at low steady-state level in adult placenta, testis, ovary, prostate, fetal kidney, spleen and skeletal muscle.

The protein is Disrupted in renal carcinoma protein 1 (DIRC1) of Homo sapiens (Human).